We begin with the raw amino-acid sequence, 565 residues long: Coiled-coil domain-containing protein 17 (565 aa).

Residues 58-87 are disordered; the sequence is IMAQEKSRDQEASTSALKRLTEETAGSPGE. 2 coiled-coil regions span residues 97 to 160 and 219 to 271; these read ARRM…TLGA and LQLQ…KVLS.

The protein is Coiled-coil domain-containing protein 17 (Ccdc17) of Mus musculus (Mouse).